The sequence spans 1249 residues: Nuclear envelope pore membrane protein POM 121 (1249 aa).

Residues M1 to A10 show a composition bias toward low complexity. The interval M1 to G27 is disordered. The tract at residues M1–A34 is cisternal side. The interval M1–S285 is required for targeting to the nucleus and nuclear pore complex. The span at G11 to G25 shows a compositional bias: basic and acidic residues. Residues V35–L55 traverse the membrane as a helical segment. Residues A56 to K1249 are pore side. A Phosphoserine modification is found at S94. Disordered stretches follow at residues L136–L220, K319–S530, K602–S776, P959–A986, and I1226–K1249. The span at A168–P190 shows a compositional bias: pro residues. Phosphoserine is present on residues S345, S351, S371, S393, and S396. The segment covering I405–I423 has biased composition (polar residues). Residues P432–S445 are compositionally biased toward low complexity. Composition is skewed to basic and acidic residues over residues R450–H462 and A472–P486. Polar residues predominate over residues N491–G502. Low complexity predominate over residues P635–S652. A compositionally biased stretch (polar residues) spans Q683 to P696. 2 stretches are compositionally biased toward low complexity: residues S712 to P726 and S749 to T770. Basic residues predominate over residues L1239 to K1249.

This sequence belongs to the POM121 family.

It is found in the nucleus. The protein localises to the nuclear pore complex. The protein resides in the nucleus membrane. Its subcellular location is the endoplasmic reticulum membrane. Essential component of the nuclear pore complex (NPC). The repeat-containing domain may be involved in anchoring components of the pore complex to the pore membrane. When overexpressed in cells induces the formation of cytoplasmic annulate lamellae (AL). In Homo sapiens (Human), this protein is Nuclear envelope pore membrane protein POM 121 (POM121).